The following is a 277-amino-acid chain: MSETPTACLIGWPAAHSRSPIIHKYWLKELGIAGDYRIEAVEPAAFPDFIASLAARGYCGANVTIPHKEKALALSLPDARARAVGAANTLYFRDDKLHSTNTDVEGFIGNLDASAQRWRADDDAVVLGAGGSARAVVFGLIERGVPRIHLVNRSRERAQALAQPYGERVSVASWDDVESLLPKAGLVVNTTSLGMKGQPPLPLDVALLRADATVADLVYVPLRTELLTAAAGRGLQTADGLGMLLHQAVRGFELWFGRRPQVSPALRALVEADLTVK.

Shikimate-binding positions include 17-19 (SRS) and threonine 64. Lysine 68 (proton acceptor) is an active-site residue. Shikimate-binding residues include asparagine 88 and aspartate 103. NADP(+)-binding positions include 128–132 (GAGGS) and leucine 217. Tyrosine 219 lines the shikimate pocket. An NADP(+)-binding site is contributed by glycine 240.

This sequence belongs to the shikimate dehydrogenase family. In terms of assembly, homodimer.

The catalysed reaction is shikimate + NADP(+) = 3-dehydroshikimate + NADPH + H(+). Its pathway is metabolic intermediate biosynthesis; chorismate biosynthesis; chorismate from D-erythrose 4-phosphate and phosphoenolpyruvate: step 4/7. Its function is as follows. Involved in the biosynthesis of the chorismate, which leads to the biosynthesis of aromatic amino acids. Catalyzes the reversible NADPH linked reduction of 3-dehydroshikimate (DHSA) to yield shikimate (SA). This chain is Shikimate dehydrogenase (NADP(+)), found in Afipia carboxidovorans (strain ATCC 49405 / DSM 1227 / KCTC 32145 / OM5) (Oligotropha carboxidovorans).